The primary structure comprises 298 residues: Beta-soluble NSF attachment protein (298 aa).

Belongs to the SNAP family. As to quaternary structure, interacts with PRKCABP, and disrupts the interaction between GRIA2 and PRKCABP, leading to the internalization of GRIA2.

Its subcellular location is the membrane. Required for vesicular transport between the endoplasmic reticulum and the Golgi apparatus. The chain is Beta-soluble NSF attachment protein (NAPB) from Homo sapiens (Human).